We begin with the raw amino-acid sequence, 279 residues long: Large ribosomal subunit protein uL2 (279 aa).

The interval 218–279 (RPQTRGSAMN…ITRRKSNPKR (62 aa)) is disordered. Positions 255–279 (KGSKTRRKKASDKLIITRRKSNPKR) are enriched in basic residues.

This sequence belongs to the universal ribosomal protein uL2 family. As to quaternary structure, part of the 50S ribosomal subunit. Forms a bridge to the 30S subunit in the 70S ribosome.

In terms of biological role, one of the primary rRNA binding proteins. Required for association of the 30S and 50S subunits to form the 70S ribosome, for tRNA binding and peptide bond formation. It has been suggested to have peptidyltransferase activity; this is somewhat controversial. Makes several contacts with the 16S rRNA in the 70S ribosome. This chain is Large ribosomal subunit protein uL2, found in Sulfurimonas denitrificans (strain ATCC 33889 / DSM 1251) (Thiomicrospira denitrificans (strain ATCC 33889 / DSM 1251)).